A 355-amino-acid chain; its full sequence is Uroporphyrinogen decarboxylase (355 aa).

Substrate contacts are provided by residues 27–31 (RQAGR), D78, Y155, S210, and H328.

The protein belongs to the uroporphyrinogen decarboxylase family. As to quaternary structure, homodimer.

The protein resides in the cytoplasm. The catalysed reaction is uroporphyrinogen III + 4 H(+) = coproporphyrinogen III + 4 CO2. Its pathway is porphyrin-containing compound metabolism; protoporphyrin-IX biosynthesis; coproporphyrinogen-III from 5-aminolevulinate: step 4/4. Its function is as follows. Catalyzes the decarboxylation of four acetate groups of uroporphyrinogen-III to yield coproporphyrinogen-III. This is Uroporphyrinogen decarboxylase from Pseudomonas paraeruginosa (strain DSM 24068 / PA7) (Pseudomonas aeruginosa (strain PA7)).